The sequence spans 318 residues: Aspartate carbamoyltransferase catalytic subunit (318 aa).

Residues arginine 59 and threonine 60 each coordinate carbamoyl phosphate. Lysine 87 is a binding site for L-aspartate. Residues arginine 109, histidine 137, and glutamine 140 each contribute to the carbamoyl phosphate site. The L-aspartate site is built by arginine 170 and arginine 224. Carbamoyl phosphate contacts are provided by glycine 265 and proline 266.

This sequence belongs to the aspartate/ornithine carbamoyltransferase superfamily. ATCase family. As to quaternary structure, heterododecamer (2C3:3R2) of six catalytic PyrB chains organized as two trimers (C3), and six regulatory PyrI chains organized as three dimers (R2).

The catalysed reaction is carbamoyl phosphate + L-aspartate = N-carbamoyl-L-aspartate + phosphate + H(+). Its pathway is pyrimidine metabolism; UMP biosynthesis via de novo pathway; (S)-dihydroorotate from bicarbonate: step 2/3. Functionally, catalyzes the condensation of carbamoyl phosphate and aspartate to form carbamoyl aspartate and inorganic phosphate, the committed step in the de novo pyrimidine nucleotide biosynthesis pathway. The polypeptide is Aspartate carbamoyltransferase catalytic subunit (Allorhizobium ampelinum (strain ATCC BAA-846 / DSM 112012 / S4) (Agrobacterium vitis (strain S4))).